The chain runs to 307 residues: Malonyl-[acyl-carrier protein] O-methyltransferase (307 aa).

Belongs to the methyltransferase superfamily.

It catalyses the reaction malonyl-[ACP] + S-adenosyl-L-methionine = malonyl-[ACP] methyl ester + S-adenosyl-L-homocysteine. Its pathway is cofactor biosynthesis; biotin biosynthesis. Converts the free carboxyl group of a malonyl-thioester to its methyl ester by transfer of a methyl group from S-adenosyl-L-methionine (SAM). It allows to synthesize pimeloyl-ACP via the fatty acid synthetic pathway. The chain is Malonyl-[acyl-carrier protein] O-methyltransferase from Nitrosospira multiformis (strain ATCC 25196 / NCIMB 11849 / C 71).